A 153-amino-acid chain; its full sequence is Transmembrane inner ear expressed protein (153 aa).

The N-terminal stretch at 1-28 (MAGRQHGSGRLWALGGAALGACLAGVAT) is a signal peptide. Residues 29–58 (QLVEPSTAPPKPKPPPLTKETVVFWDMRLW) are Extracellular-facing. Residues 59–79 (HVVGIFSLFVLSIIITLCCVF) traverse the membrane as a helical segment. Topologically, residues 80–153 (NCRVPRTRKE…KNEAKKKGEK (74 aa)) are cytoplasmic.

Forms the MET channel composed of TMC (TMC1 or TMC2), TMIE, TOMT, CIB (CIB2 or CIB3), LHPL5 and PCDH15. Expressed in brain, kidney, liver, lung and cochlea.

It is found in the membrane. Its function is as follows. Auxiliary subunit of the mechanotransducer (MET) non-specific cation channel complex located at the tips of stereocilia of cochlear hair cells and that mediates sensory transduction in the auditory system. The MET complex is composed of two dimeric pore-forming ion-conducting transmembrane TMC (TMC1 or TMC2) subunits, and aided by several auxiliary proteins including LHFPL5, TMIE, CIB2/3 and TOMT, and the tip-link PCDH15. May contribute to the formation of the pore. The protein is Transmembrane inner ear expressed protein (Tmie) of Mus musculus (Mouse).